Here is a 620-residue protein sequence, read N- to C-terminus: 1-deoxy-D-xylulose-5-phosphate synthase (620 aa).

Residues His-80 and 121 to 123 contribute to the thiamine diphosphate site; that span reads GHS. Asp-152 is a binding site for Mg(2+). Residues 153-154, Asn-181, Tyr-288, and Glu-370 each bind thiamine diphosphate; that span reads GA. Asn-181 contributes to the Mg(2+) binding site.

This sequence belongs to the transketolase family. DXPS subfamily. Homodimer. Requires Mg(2+) as cofactor. The cofactor is thiamine diphosphate.

It catalyses the reaction D-glyceraldehyde 3-phosphate + pyruvate + H(+) = 1-deoxy-D-xylulose 5-phosphate + CO2. It functions in the pathway metabolic intermediate biosynthesis; 1-deoxy-D-xylulose 5-phosphate biosynthesis; 1-deoxy-D-xylulose 5-phosphate from D-glyceraldehyde 3-phosphate and pyruvate: step 1/1. Functionally, catalyzes the acyloin condensation reaction between C atoms 2 and 3 of pyruvate and glyceraldehyde 3-phosphate to yield 1-deoxy-D-xylulose-5-phosphate (DXP). This is 1-deoxy-D-xylulose-5-phosphate synthase from Pseudoalteromonas translucida (strain TAC 125).